Here is a 930-residue protein sequence, read N- to C-terminus: Protein translocase subunit SecA (930 aa).

Residues Q87, 105–109 (GEGKT), and D516 each bind ATP. Residues C914, C916, C925, and H926 each contribute to the Zn(2+) site.

This sequence belongs to the SecA family. In terms of assembly, monomer and homodimer. Part of the essential Sec protein translocation apparatus which comprises SecA, SecYEG and auxiliary proteins SecDF-YajC and YidC. Requires Zn(2+) as cofactor.

It is found in the cell inner membrane. Its subcellular location is the cytoplasm. It catalyses the reaction ATP + H2O + cellular proteinSide 1 = ADP + phosphate + cellular proteinSide 2.. Functionally, part of the Sec protein translocase complex. Interacts with the SecYEG preprotein conducting channel. Has a central role in coupling the hydrolysis of ATP to the transfer of proteins into and across the cell membrane, serving both as a receptor for the preprotein-SecB complex and as an ATP-driven molecular motor driving the stepwise translocation of polypeptide chains across the membrane. The sequence is that of Protein translocase subunit SecA from Variovorax paradoxus (strain S110).